A 170-amino-acid chain; its full sequence is Probable calcium-binding protein CML27 (170 aa).

The residue at position 2 (Ala2) is an N-acetylalanine. EF-hand domains lie at 19-54, 55-85, 88-123, and 136-159; these read ANPEELKKVFDQFDSNGDGKISVLELGGVFKAMGTS, YTETELNRVLEEVDTDRDGYINLDEFSTLCR, SSAAEIRDAFDLYDQDKNGLISASELHQVLNRLGMS, and VDADGDGNVNFEEFQKMMTSSSLL. 19 residues coordinate Ca(2+): Asp32, Asn34, Asp36, Lys38, Glu43, Asp68, Asp70, Asp72, Tyr74, Glu79, Asp101, Asp103, Asn105, Glu112, Asp137, Asp139, Asp141, Asn143, and Glu148.

Functionally, potential calcium sensor. The sequence is that of Probable calcium-binding protein CML27 (CML27) from Arabidopsis thaliana (Mouse-ear cress).